The following is a 43-amino-acid chain: Protein PsbN (43 aa).

A helical membrane pass occupies residues 5 to 27 (TLVTISISCLLVSFTGYAIYTSF).

It belongs to the PsbN family.

The protein resides in the plastid. It is found in the chloroplast thylakoid membrane. In terms of biological role, may play a role in photosystem I and II biogenesis. The sequence is that of Protein PsbN from Welwitschia mirabilis (Tree tumbo).